The chain runs to 336 residues: Fructose-1,6-bisphosphatase class 1 (336 aa).

Glu-92, Asp-115, Leu-117, and Asp-118 together coordinate Mg(2+). Substrate contacts are provided by residues 118-121 (DGSS), Asn-211, Tyr-244, 262-264 (YLY), and Lys-274. Glu-280 contacts Mg(2+).

It belongs to the FBPase class 1 family. In terms of assembly, homotetramer. Mg(2+) serves as cofactor.

The protein localises to the cytoplasm. It carries out the reaction beta-D-fructose 1,6-bisphosphate + H2O = beta-D-fructose 6-phosphate + phosphate. Its pathway is carbohydrate biosynthesis; gluconeogenesis. The polypeptide is Fructose-1,6-bisphosphatase class 1 (Aliivibrio fischeri (strain ATCC 700601 / ES114) (Vibrio fischeri)).